Consider the following 239-residue polypeptide: Small ribosomal subunit protein uS3 (239 aa).

The KH type-2 domain maps to Val-39 to Arg-107. The tract at residues Gly-214 to Arg-239 is disordered. A compositionally biased stretch (basic and acidic residues) spans Glu-216–Arg-239.

This sequence belongs to the universal ribosomal protein uS3 family. In terms of assembly, part of the 30S ribosomal subunit. Forms a tight complex with proteins S10 and S14.

Binds the lower part of the 30S subunit head. Binds mRNA in the 70S ribosome, positioning it for translation. The sequence is that of Small ribosomal subunit protein uS3 from Xylella fastidiosa (strain M12).